A 329-amino-acid chain; its full sequence is 4-diphosphocytidyl-2-C-methyl-D-erythritol kinase (329 aa).

The active site involves Lys-14. Residue 117–127 (PSGAGMGGASS) coordinates ATP. The active site involves Asp-166.

Belongs to the GHMP kinase family. IspE subfamily.

It carries out the reaction 4-CDP-2-C-methyl-D-erythritol + ATP = 4-CDP-2-C-methyl-D-erythritol 2-phosphate + ADP + H(+). The protein operates within isoprenoid biosynthesis; isopentenyl diphosphate biosynthesis via DXP pathway; isopentenyl diphosphate from 1-deoxy-D-xylulose 5-phosphate: step 3/6. Catalyzes the phosphorylation of the position 2 hydroxy group of 4-diphosphocytidyl-2C-methyl-D-erythritol. This chain is 4-diphosphocytidyl-2-C-methyl-D-erythritol kinase, found in Rhodopirellula baltica (strain DSM 10527 / NCIMB 13988 / SH1).